We begin with the raw amino-acid sequence, 29 residues long: Cytochrome b6-f complex subunit 8 (29 aa).

A helical membrane pass occupies residues 3–23; that stretch reads IISLGWSSLLVVFTFSLSLVV.

Belongs to the PetN family. The 4 large subunits of the cytochrome b6-f complex are cytochrome b6, subunit IV (17 kDa polypeptide, PetD), cytochrome f and the Rieske protein, while the 4 small subunits are PetG, PetL, PetM and PetN. The complex functions as a dimer.

The protein localises to the plastid. It is found in the chloroplast thylakoid membrane. Component of the cytochrome b6-f complex, which mediates electron transfer between photosystem II (PSII) and photosystem I (PSI), cyclic electron flow around PSI, and state transitions. In Rhodomonas salina (Cryptomonas salina), this protein is Cytochrome b6-f complex subunit 8.